The following is a 448-amino-acid chain: Chromogranin-A (448 aa).

Residues 1–18 (MRSAVVLALLLCAGQVIA) form the signal peptide. Cysteine 35 and cysteine 56 form a disulfide bridge. Residues 116 to 251 (LKEVTEEALS…AFNPHPSLSY (136 aa)) form a disordered region. 2 stretches are compositionally biased toward basic and acidic residues: residues 129-139 (AEARGDSKEVE) and 158-175 (QESR…KEAI). Phosphoserine is present on serine 197. A compositionally biased stretch (basic and acidic residues) spans 205–222 (VDREKGLGAERGQQAKRE). Residues 223-238 (EEEDEAGEKADAEEEG) are compositionally biased toward acidic residues. Phosphoserine occurs at positions 258 and 288. The disordered stretch occupies residues 263–429 (LVVDGARKTG…PEDQELESLS (167 aa)). The residue at position 308 (glycine 308) is a Glycine amide. The span at 310 to 350 (KSRELEQEKEQERLSKEWEDAKRWSKMDQLAKELTAEKRLE) shows a compositional bias: basic and acidic residues. 3 positions are modified to phosphoserine: serine 311, serine 324, and serine 362. Position 363 is a methionine sulfoxide (methionine 363). Phosphoserine occurs at positions 389, 393, 415, and 429. Positions 405 to 422 (YPEEKKEEEGSANRRPED) are enriched in basic and acidic residues. O-linked (Xyl...) (chondroitin sulfate) serine glycosylation is present at serine 415.

The protein belongs to the chromogranin/secretogranin protein family. In terms of assembly, self-interacts; self-assembly is promoted in vitro by chondroitin sulfate attachment which occurs at mildly acidic pH conditions. Interacts with SCG3. Interacts with ITPR1 in the secretory granules. O-glycosylated; contains chondroitin sulfate (CS). CS attachment is pH-dependent, being observed at mildly acidic conditions of pH 5 but not at neutral pH, and promotes self-assembly in vitro. As to expression, highly expressed in adrenal medulla and pituitary gland. Weaker expression detected in cerebrum, cerebellum, spinal cord, liver, thyroid gland, striated muscle, lung, spleen, kidney, parotid gland, and sublingual gland.

It localises to the secreted. The protein resides in the cytoplasmic vesicle. It is found in the secretory vesicle. The protein localises to the neuronal dense core vesicle. Functionally, strongly inhibits glucose induced insulin release from the pancreas. Its function is as follows. Inhibits catecholamine release from chromaffin cells and noradrenergic neurons by acting as a non-competitive nicotinic cholinergic antagonist. Can induce mast cell migration, degranulation and production of cytokines and chemokines. In terms of biological role, regulates granule biogenesis in endocrine cells by up-regulating the transcription of protease nexin 1 (SERPINE2) via a cAMP-PKA-SP1 pathway. This leads to inhibition of granule protein degradation in the Golgi complex which in turn promotes granule formation. In Equus caballus (Horse), this protein is Chromogranin-A (CHGA).